The primary structure comprises 312 residues: Ribosomal protein L11 methyltransferase (312 aa).

S-adenosyl-L-methionine contacts are provided by threonine 160, glycine 181, aspartate 203, and asparagine 246.

Belongs to the methyltransferase superfamily. PrmA family.

The protein localises to the cytoplasm. The enzyme catalyses L-lysyl-[protein] + 3 S-adenosyl-L-methionine = N(6),N(6),N(6)-trimethyl-L-lysyl-[protein] + 3 S-adenosyl-L-homocysteine + 3 H(+). Its function is as follows. Methylates ribosomal protein L11. The sequence is that of Ribosomal protein L11 methyltransferase from Staphylococcus aureus (strain bovine RF122 / ET3-1).